Reading from the N-terminus, the 169-residue chain is Neurotensin/neuromedin N (169 aa).

A signal peptide spans 1–22 (MIGMNLQLVCLTLLAFSSWSLC).

This sequence belongs to the neurotensin family. As to quaternary structure, interacts with NTSR1. Interacts with SORT1. Interacts with SORL1. In terms of processing, neurotensin is cleaved and degraded by Angiotensin-converting enzyme (ACE) and neprilysin (MME).

The protein resides in the secreted. It is found in the cytoplasmic vesicle. It localises to the secretory vesicle. Functionally, neurotensin may play an endocrine or paracrine role in the regulation of fat metabolism. It causes contraction of smooth muscle. This Rattus norvegicus (Rat) protein is Neurotensin/neuromedin N (Nts).